We begin with the raw amino-acid sequence, 537 residues long: Oviduct-specific glycoprotein (537 aa).

Positions 1-18 (LLLCVGLLLVLKHHDGAA) are cleaved as a signal peptide. A GH18 domain is found at 19–382 (HKLVCYFTNW…HTLNNLLVND (364 aa)). Residues C23 and C48 are joined by a disulfide bond. Chitin-binding positions include 68–69 (PQ), 95–98 (GGWN), Y139, 208–211 (LSYD), and W352. N-linked (GlcNAc...) asparagine glycosylation occurs at N399. 2 disordered regions span residues 446–475 (EIAT…GEKP) and 498–537 (TGQK…ERRL). Basic and acidic residues predominate over residues 528–537 (GRAETLERRL).

It belongs to the glycosyl hydrolase 18 family. As to expression, oviduct.

The protein localises to the cytoplasmic vesicle. It is found in the secretory vesicle. Its function is as follows. Binds to oocyte zona pellucida in vivo. May play a role in the fertilization process and/or early embryonic development. The sequence is that of Oviduct-specific glycoprotein (OVGP1) from Bos taurus (Bovine).